Consider the following 554-residue polypeptide: Formate--tetrahydrofolate ligase (554 aa).

65–72 lines the ATP pocket; that stretch reads TPAGEGKT.

This sequence belongs to the formate--tetrahydrofolate ligase family.

It carries out the reaction (6S)-5,6,7,8-tetrahydrofolate + formate + ATP = (6R)-10-formyltetrahydrofolate + ADP + phosphate. The protein operates within one-carbon metabolism; tetrahydrofolate interconversion. The protein is Formate--tetrahydrofolate ligase of Petrotoga mobilis (strain DSM 10674 / SJ95).